Here is a 150-residue protein sequence, read N- to C-terminus: Phosphopantetheine adenylyltransferase (150 aa).

A substrate-binding site is contributed by serine 10. Residues 10 to 11 (SF) and histidine 18 contribute to the ATP site. Substrate is bound by residues lysine 42, threonine 74, and arginine 88. Residues 89–91 (GLR), glutamate 99, and 124–130 (LAYISSS) contribute to the ATP site.

This sequence belongs to the bacterial CoaD family. Homohexamer. It depends on Mg(2+) as a cofactor.

It is found in the cytoplasm. It catalyses the reaction (R)-4'-phosphopantetheine + ATP + H(+) = 3'-dephospho-CoA + diphosphate. The protein operates within cofactor biosynthesis; coenzyme A biosynthesis; CoA from (R)-pantothenate: step 4/5. Functionally, reversibly transfers an adenylyl group from ATP to 4'-phosphopantetheine, yielding dephospho-CoA (dPCoA) and pyrophosphate. This is Phosphopantetheine adenylyltransferase from Cytophaga hutchinsonii (strain ATCC 33406 / DSM 1761 / CIP 103989 / NBRC 15051 / NCIMB 9469 / D465).